Reading from the N-terminus, the 362-residue chain is Putative transport protein BB_0006 (362 aa).

8 helical membrane-spanning segments follow: residues 20 to 40 (FYCI…EAVF), 43 to 63 (LAIS…LARF), 68 to 88 (FLIV…IFSF), 144 to 164 (EIIG…FLLS), 212 to 232 (ILVF…WAVL), 234 to 254 (FVFN…IVIT), 265 to 285 (IVLY…NILE), and 304 to 326 (LFFW…TVIV).

Belongs to the autoinducer-2 exporter (AI-2E) (TC 2.A.86) family.

Its subcellular location is the cell membrane. In Borreliella burgdorferi (strain ATCC 35210 / DSM 4680 / CIP 102532 / B31) (Borrelia burgdorferi), this protein is Putative transport protein BB_0006.